Here is a 131-residue protein sequence, read N- to C-terminus: Small ribosomal subunit protein uS11 (131 aa).

Belongs to the universal ribosomal protein uS11 family. As to quaternary structure, part of the 30S ribosomal subunit.

Located on the platform of the 30S subunit. This is Small ribosomal subunit protein uS11 from Haloquadratum walsbyi (strain DSM 16790 / HBSQ001).